A 511-amino-acid polypeptide reads, in one-letter code: Phosphoenolpyruvate carboxylase (511 aa).

This sequence belongs to the PEPCase type 2 family. In terms of assembly, homotetramer. Mg(2+) is required as a cofactor.

It catalyses the reaction oxaloacetate + phosphate = phosphoenolpyruvate + hydrogencarbonate. Catalyzes the irreversible beta-carboxylation of phosphoenolpyruvate (PEP) to form oxaloacetate (OAA), a four-carbon dicarboxylic acid source for the tricarboxylic acid cycle. In Saccharolobus islandicus (strain L.S.2.15 / Lassen #1) (Sulfolobus islandicus), this protein is Phosphoenolpyruvate carboxylase.